The chain runs to 444 residues: Maturase K (444 aa).

Belongs to the intron maturase 2 family. MatK subfamily.

It is found in the plastid. Its subcellular location is the chloroplast. In terms of biological role, usually encoded in the trnK tRNA gene intron. Probably assists in splicing its own and other chloroplast group II introns. The protein is Maturase K of Chamaecyparis lawsoniana (Lawson false cypress).